Reading from the N-terminus, the 371-residue chain is Alanine dehydrogenase (371 aa).

2 residues coordinate substrate: Arg15 and Lys75. His96 acts as the Proton donor/acceptor in catalysis. NAD(+) contacts are provided by residues Ser134, Thr178–Ala179, Asp198, Lys203, Ser220, Val239–Leu240, Ile267–Asp270, Arg279, and Val298–Met301. The active-site Proton donor/acceptor is Asp270. Residues Glu323 and His327 each coordinate Mg(2+).

Belongs to the AlaDH/PNT family. Homohexamer. Trimer of dimers. Mg(2+) serves as cofactor.

It localises to the secreted. The enzyme catalyses L-alanine + NAD(+) + H2O = pyruvate + NH4(+) + NADH + H(+). Its pathway is amino-acid degradation; L-alanine degradation via dehydrogenase pathway; NH(3) and pyruvate from L-alanine: step 1/1. Its function is as follows. Catalyzes the reversible reductive amination of pyruvate to L-alanine. However, since the physiological environment of M.tuberculosis has a neutral pH, it can be assumed that the enzyme catalyzes exclusively the formation of L-alanine. May play a role in cell wall synthesis as L-alanine is an important constituent of the peptidoglycan layer. This is Alanine dehydrogenase (ald) from Mycobacterium tuberculosis (strain CDC 1551 / Oshkosh).